Reading from the N-terminus, the 430-residue chain is Inner membrane transport protein YbaT (430 aa).

The Cytoplasmic portion of the chain corresponds to Met1–Gly14. A helical transmembrane segment spans residues Leu15 to Leu35. The Periplasmic segment spans residues Gly36 to Ala38. A helical membrane pass occupies residues Ala39 to Phe59. The Cytoplasmic segment spans residues Ser60–Gly88. The helical transmembrane segment at Val89–Val109 threads the bilayer. Residues Ala110 to Glu128 are Periplasmic-facing. The chain crosses the membrane as a helical span at residues His129–Ser149. Residues Asn150 to Glu157 are Cytoplasmic-facing. The helical transmembrane segment at Val158–Ser178 threads the bilayer. The Periplasmic portion of the chain corresponds to Leu179–Ser192. A helical membrane pass occupies residues Gly193 to Ala213. Topologically, residues Asn214–Arg228 are cytoplasmic. Residues Ala229–Leu249 form a helical membrane-spanning segment. Topologically, residues Ser250 to Leu272 are periplasmic. Residues Leu273–Ile293 traverse the membrane as a helical segment. The Cytoplasmic segment spans residues Asn294 to Ser325. A helical transmembrane segment spans residues Thr326–Gly346. Residue Ser347 is a topological domain, periplasmic. The helical transmembrane segment at Leu348–Ile368 threads the bilayer. Residues Arg369–Pro379 lie on the Cytoplasmic side of the membrane. The helical transmembrane segment at Ile380–Trp400 threads the bilayer. Residues Ser401–Gly403 are Periplasmic-facing. A helical transmembrane segment spans residues Ser404–Met424. The Cytoplasmic segment spans residues Lys425–Val430.

This sequence belongs to the amino acid-polyamine-organocation (APC) superfamily.

The protein resides in the cell inner membrane. Functionally, probable amino-acid or metabolite transport protein. The sequence is that of Inner membrane transport protein YbaT (ybaT) from Escherichia coli (strain K12).